Reading from the N-terminus, the 76-residue chain is Putative defensin-like protein 184 (76 aa).

The first 21 residues, 1–21 (MKNSSILFVLIIVVFLISSSG), serve as a signal peptide directing secretion. 4 disulfides stabilise this stretch: Cys-32/Cys-76, Cys-38/Cys-58, Cys-44/Cys-70, and Cys-48/Cys-72.

Belongs to the DEFL family.

Its subcellular location is the secreted. The polypeptide is Putative defensin-like protein 184 (LCR18) (Arabidopsis thaliana (Mouse-ear cress)).